The following is a 443-amino-acid chain: Dynein regulatory complex protein 9 (443 aa).

2 disordered regions span residues 1–34 (MEEDSLEDSNLPPKVWHSEMTVSVTGEPPSTVEE) and 415–443 (GFKMPKDKVDSKDSKGKGKGKDKRRGKKK). The region spanning 393 to 422 (ELKSVIKLQAWWRGTMIRREIGGFKMPKDK) is the IQ domain. A compositionally biased stretch (basic and acidic residues) spans 415-430 (GFKMPKDKVDSKDSKG). Positions 431–443 (KGKGKDKRRGKKK) are enriched in basic residues.

This sequence belongs to the DRC9 family. Component of the nexin-dynein regulatory complex (N-DRC). Interacts (via IQ domain) with CALM when calcium levels are low. Does not interact with CALM in the presence of Ca(2+). Interacts with the HSP70 proteins HSPA1L and HSPA8. May form a complex with CAMK4 and HSP70.

The protein localises to the cytoplasm. It is found in the cell projection. The protein resides in the cilium. It localises to the flagellum. Its subcellular location is the cytoskeleton. The protein localises to the flagellum axoneme. In terms of biological role, component of the nexin-dynein regulatory complex (N-DRC), a key regulator of ciliary/flagellar motility which maintains the alignment and integrity of the distal axoneme and regulates microtubule sliding in motile axonemes. Binds calmodulin when cellular Ca(2+) levels are low and thereby contributes to the regulation of calcium and calmodulin-dependent protein kinase IV (CAMK4) activity; contributes to the regulation of CAMK4 signaling cascades. Required for normal axoneme assembly in sperm flagella, normal sperm tail formation and for male fertility. In Homo sapiens (Human), this protein is Dynein regulatory complex protein 9 (IQCG).